A 157-amino-acid polypeptide reads, in one-letter code: WPP domain-containing protein 3 (157 aa).

Residues 1–20 show a composition bias toward polar residues; the sequence is MAETADTINTTVSTPQPQLE. Residues 1–41 form a disordered region; it reads MAETADTINTTVSTPQPQLESRSDETSCLQKHRSDATSEVT. Over residues 32-41 the composition is skewed to basic and acidic residues; sequence HRSDATSEVT. Positions 37 to 138 are WPP; degenerate; it reads TSEVTKEEKS…IESAEVRFKA (102 aa).

In terms of tissue distribution, expressed in roots, stems and leaves.

The protein resides in the cytoplasm. It is found in the nucleus. Its function is as follows. Regulates the mitotic activity in roots. This Arabidopsis thaliana (Mouse-ear cress) protein is WPP domain-containing protein 3 (WPP3).